Here is a 639-residue protein sequence, read N- to C-terminus: MDLLYYMTVSLLGFILSLTTFIGETTRALSDDVSSPCKASGFLGDIALTEDDYEREMIRARHNREQYRRRILQERQTRTTGARHHIKKRTIEEAKVRHVRAVTARPERRWTDAVIPYEIDGNFTGSQRAMFKQAMRHWENYTCITFVERNPANSEHDNHIVFTYQACGCCSFVGRKGDGAQAVSVGKNCDKFGVVVHELGHVVGFWHEHTRPDRNEFVGIVHQNIVPGQEYNFRVLDAAEVDSLGETYDFASIMHYARNTFSRGIWLDTILPRKDPESGIRPEIGQRKHLSEGDIIQANLLYKCPSCGRTLLESTGNFSSPEWPGQYDGDQTCVWRISVTPGETISLQFTGFELVGSDGCWYNYLEVRDGHWRHSPLLGRFCGASLPDPILSSDSRLWIELKSSAHRYSRGFAANYEAICGGHIERESGTLQSPNYPDDYHPSKECVWLITMPANYTVGLSFQSFEIERHETCIYDYVEVRDGHEDTSPLIGRYCGYFIPDDIKSTGNKMMVTFVSDGSVNKGGFSADFFKEKDECAQPDQGGCMDVCVNTIGSYRCDCRPGYELSSDGRRCEVAAEVYSLVYEGISPALLIPSPIRGTRTVSGRSSHHLTTGSHSSLSPLTSRVTRCASTTTLMSVAV.

Residues 1-23 (MDLLYYMTVSLLGFILSLTTFIG) form the signal peptide. Residues 24–109 (ETTRALSDDV…RAVTARPERR (86 aa)) constitute a propeptide that is removed on maturation. The Peptidase M12A domain maps to 100-305 (RAVTARPERR…IQANLLYKCP (206 aa)). Asparagine 122 and asparagine 140 each carry an N-linked (GlcNAc...) asparagine glycan. 6 cysteine pairs are disulfide-bonded: cysteine 143–cysteine 304, cysteine 167–cysteine 189, cysteine 169–cysteine 170, cysteine 307–cysteine 333, cysteine 360–cysteine 382, and cysteine 420–cysteine 446. Histidine 197 serves as a coordination point for Zn(2+). The active site involves glutamate 198. Positions 201 and 207 each coordinate Zn(2+). CUB domains follow at residues 307–419 (CGRT…YEAI) and 420–531 (CGGH…DFFK). Residue asparagine 317 is glycosylated (N-linked (GlcNAc...) asparagine). Residue asparagine 455 is glycosylated (N-linked (GlcNAc...) asparagine). Intrachain disulfides connect cysteine 473–cysteine 495, cysteine 536–cysteine 548, cysteine 544–cysteine 557, and cysteine 559–cysteine 572. The EGF-like; calcium-binding domain occupies 532–573 (EKDECAQPDQGGCMDVCVNTIGSYRCDCRPGYELSSDGRRCE).

Requires Zn(2+) as cofactor. As to expression, ectodermal and primary mesenchyme cells in hatched blastula.

This chain is Bone morphogenetic protein 1 homolog, found in Strongylocentrotus purpuratus (Purple sea urchin).